Here is a 255-residue protein sequence, read N- to C-terminus: Large ribosomal subunit protein uL2 (255 aa).

The disordered stretch occupies residues 211 to 235 (PHGGGNHQHVGHATTTKRDDPAGKK).

Belongs to the universal ribosomal protein uL2 family.

The chain is Large ribosomal subunit protein uL2 (rpl8) from Dictyostelium discoideum (Social amoeba).